The following is a 138-amino-acid chain: Large ribosomal subunit protein uL16 (138 aa).

The protein belongs to the universal ribosomal protein uL16 family. As to quaternary structure, part of the 50S ribosomal subunit.

In terms of biological role, binds 23S rRNA and is also seen to make contacts with the A and possibly P site tRNAs. This is Large ribosomal subunit protein uL16 from Mycoplasma genitalium (strain ATCC 33530 / DSM 19775 / NCTC 10195 / G37) (Mycoplasmoides genitalium).